We begin with the raw amino-acid sequence, 465 residues long: Mitochondrial distribution and morphology protein 10 (465 aa).

The protein belongs to the MDM10 family. In terms of assembly, component of the ER-mitochondria encounter structure (ERMES) or MDM complex, composed of MMM1, MDM10, MDM12 and MDM34. Associates with the mitochondrial outer membrane sorting assembly machinery SAM(core) complex.

Its subcellular location is the mitochondrion outer membrane. Its function is as follows. Component of the ERMES/MDM complex, which serves as a molecular tether to connect the endoplasmic reticulum and mitochondria. Components of this complex are involved in the control of mitochondrial shape and protein biogenesis and may function in phospholipid exchange. MDM10 is involved in the late assembly steps of the general translocase of the mitochondrial outer membrane (TOM complex). Functions in the TOM40-specific route of the assembly of outer membrane beta-barrel proteins, including the association of TOM40 with the receptor TOM22 and small TOM proteins. Can associate with the SAM(core) complex as well as the MDM12-MMM1 complex, both involved in late steps of the major beta-barrel assembly pathway, that is responsible for biogenesis of all outer membrane beta-barrel proteins. May act as a switch that shuttles between both complexes and channels precursor proteins into the TOM40-specific pathway. Plays a role in mitochondrial morphology and in the inheritance of mitochondria. The polypeptide is Mitochondrial distribution and morphology protein 10 (Eremothecium gossypii (strain ATCC 10895 / CBS 109.51 / FGSC 9923 / NRRL Y-1056) (Yeast)).